The following is a 331-amino-acid chain: MQEEILYKWNYDDFKDKKFKIPKLNMPWDYKFSPYFEEISLENREWIKGTKLISEESDFEKFVYLKTILMNSYLYPHCNKEVFRYINRLNEYIYIVDDFYLEDNVKGQEWVDELFDRNSKFVKENYIGSIMWEIFDDIISVGNDGATDYLIKKTHEWMDSVILFNSKKVNSKFTFEEYTNSRGVDVGMIFGLACTKVHIPPLCDEIENHPVYIDMLANYYNPIHLLINDIYSFNKETKSVRLGNYVKIAAYQLGSIQLAMDHLSKLFDEYIGKIQEKFAELEKIFPNNKDLETHLYIIKTIIACNFNCSTNPNYPRYYGEVLEAELKIINE.

The DDxx(x)D/E motif signature appears at Asp-97–Glu-102. The short motif at Asn-228–Glu-236 is the NDxxSxxxD/E motif element.

This sequence belongs to the terpene synthase family.

In terms of biological role, terpene synthase that converts its substrate farnesyl diphosphate (FPP) into several yet unidentified sesquiterpenes. The sequence is that of Terpene synthase 8 from Dictyostelium purpureum (Slime mold).